A 469-amino-acid polypeptide reads, in one-letter code: Glutamine synthetase (469 aa).

The GS beta-grasp domain maps to 15–96 (EDVKFIDVRF…INFFIHDPIT (82 aa)). The 366-residue stretch at 104–469 (PRNVAKKAEA…PYEYEQYYDV (366 aa)) folds into the GS catalytic domain. Mg(2+)-binding residues include E129 and E131. E205 is a binding site for ATP. The Mg(2+) site is built by E210 and E218. An ATP-binding site is contributed by 221-223 (YKF). L-glutamate contacts are provided by residues 262–263 (NG) and G263. H267 contributes to the Mg(2+) binding site. ATP is bound by residues 269 to 271 (HQS) and S271. R320, E326, and R338 together coordinate L-glutamate. ATP is bound by residues R338, R343, and K352. Residue E357 coordinates Mg(2+). Residue R359 coordinates L-glutamate. Y397 carries the O-AMP-tyrosine modification.

This sequence belongs to the glutamine synthetase family. As to quaternary structure, oligomer of 12 subunits arranged in the form of two hexagons. Mg(2+) serves as cofactor.

It is found in the cytoplasm. It carries out the reaction L-glutamate + NH4(+) + ATP = L-glutamine + ADP + phosphate + H(+). The activity of this enzyme could be controlled by adenylation under conditions of abundant glutamine. Its function is as follows. Catalyzes the ATP-dependent biosynthesis of glutamine from glutamate and ammonia. In Streptomyces viridochromogenes, this protein is Glutamine synthetase.